Consider the following 213-residue polypeptide: BREX protein BrxA (213 aa).

It belongs to the BrxA family.

Functionally, BREX systems (bacteriophage exclusion) provide immunity against bacteriophage. A probably non-essential part of a type 1 BREX system which protects against dsDNA phage. This system allows phage adsorption but prevents phage DNA replication, without degradation of the phage DNA. Methylation of bacterial DNA by PglX guides self/non-self discrimination. When the brxA-brxB-brxC-pglX-pglZ-brxL genes are transformed into a susceptible E.coli strain (BW25113) they confer very high resistance to infection by bacteriophage VR7 and VpaE1, about 100-fold protection against lambda, T5 and T7 and no protection against RNA phage Qbeta, ssDNA phage M13 or dSDNA phage T4 and VR5. Glycosylated phage DNA is not susceptible to BREX. The BREX system does not confer resistance to lysogenic lambda phage, i.e. prophage that are integrated into the chromosomal DNA and then induced to form phage. The sequence is that of BREX protein BrxA from Escherichia coli O9:H4 (strain HS).